A 233-amino-acid chain; its full sequence is Glyceraldehyde 3-phosphate phosphatase (233 aa).

The protein belongs to the HAD-like hydrolase superfamily. Requires Mg(2+) as cofactor.

Catalyzes the dephosphorylation of D,L-glyceraldehyde 3-phosphate in vitro. The protein is Glyceraldehyde 3-phosphate phosphatase of Methanopyrus kandleri (strain AV19 / DSM 6324 / JCM 9639 / NBRC 100938).